The primary structure comprises 316 residues: IDS-like terpene synthase 2 (316 aa).

Residues aspartate 69 and aspartate 73 each contribute to the Mg(2+) site.

It belongs to the FPP/GGPP synthase family. The cofactor is Mg(2+).

The enzyme catalyses (2E)-geranyl diphosphate + H2O = linalool + diphosphate. It carries out the reaction (2E,6E)-farnesyl diphosphate + H2O = (6E)-nerolidol + diphosphate. Its function is as follows. Terpene synthase that shows monoterpene synthase activity and produces linalool, using geranyl diphosphate (GPP) as substrate. Also shows sesquiterpene synthase activity as it is able to convert farnesyl diphosphate (FPP) into (E)-nerolidol. The chain is IDS-like terpene synthase 2 from Melampsora larici-populina (strain 98AG31 / pathotype 3-4-7) (Poplar leaf rust fungus).